The primary structure comprises 452 residues: 3-phosphoshikimate 1-carboxyvinyltransferase (452 aa).

The segment covering 1-17 has biased composition (low complexity); the sequence is MSHAAAAKPATARKSQA. The disordered stretch occupies residues 1 to 26; it reads MSHAAAAKPATARKSQALSGTARVPG. 3 residues coordinate 3-phosphoshikimate: K28, S29, and R33. Residue K28 participates in phosphoenolpyruvate binding. G100 and R128 together coordinate phosphoenolpyruvate. 3-phosphoshikimate contacts are provided by S174, Q176, D327, and K354. Q176 provides a ligand contact to phosphoenolpyruvate. Catalysis depends on D327, which acts as the Proton acceptor. Phosphoenolpyruvate-binding residues include R358 and R409.

The protein belongs to the EPSP synthase family. In terms of assembly, monomer.

It is found in the cytoplasm. The catalysed reaction is 3-phosphoshikimate + phosphoenolpyruvate = 5-O-(1-carboxyvinyl)-3-phosphoshikimate + phosphate. It participates in metabolic intermediate biosynthesis; chorismate biosynthesis; chorismate from D-erythrose 4-phosphate and phosphoenolpyruvate: step 6/7. Its function is as follows. Catalyzes the transfer of the enolpyruvyl moiety of phosphoenolpyruvate (PEP) to the 5-hydroxyl of shikimate-3-phosphate (S3P) to produce enolpyruvyl shikimate-3-phosphate and inorganic phosphate. The chain is 3-phosphoshikimate 1-carboxyvinyltransferase from Mesorhizobium japonicum (strain LMG 29417 / CECT 9101 / MAFF 303099) (Mesorhizobium loti (strain MAFF 303099)).